The chain runs to 259 residues: Ribonuclease PH (259 aa).

Residues Arg-88 and 126–128 (GTR) each bind phosphate.

The protein belongs to the RNase PH family. Homohexameric ring arranged as a trimer of dimers.

It carries out the reaction tRNA(n+1) + phosphate = tRNA(n) + a ribonucleoside 5'-diphosphate. Its function is as follows. Phosphorolytic 3'-5' exoribonuclease that plays an important role in tRNA 3'-end maturation. Removes nucleotide residues following the 3'-CCA terminus of tRNAs; can also add nucleotides to the ends of RNA molecules by using nucleoside diphosphates as substrates, but this may not be physiologically important. Probably plays a role in initiation of 16S rRNA degradation (leading to ribosome degradation) during starvation. In Mycobacterium avium (strain 104), this protein is Ribonuclease PH.